We begin with the raw amino-acid sequence, 83 residues long: Small ribosomal subunit protein bS20 (83 aa).

It belongs to the bacterial ribosomal protein bS20 family.

Binds directly to 16S ribosomal RNA. In Leuconostoc citreum (strain KM20), this protein is Small ribosomal subunit protein bS20.